The following is a 230-amino-acid chain: Large ribosomal subunit protein bL25 (230 aa).

It belongs to the bacterial ribosomal protein bL25 family. CTC subfamily. In terms of assembly, part of the 50S ribosomal subunit; part of the 5S rRNA/L5/L18/L25 subcomplex. Contacts the 5S rRNA. Binds to the 5S rRNA independently of L5 and L18.

Its function is as follows. This is one of the proteins that binds to the 5S RNA in the ribosome where it forms part of the central protuberance. The chain is Large ribosomal subunit protein bL25 (rplY) from Rhodopseudomonas palustris (strain ATCC BAA-98 / CGA009).